Consider the following 1138-residue polypeptide: BMP-2-inducible protein kinase (1138 aa).

A Phosphoserine modification is found at Ser13. The Protein kinase domain occupies 48–313; that stretch reads VTLEESLAEG…DIFQVSYFAF (266 aa). ATP contacts are provided by residues 54–62 and Lys76; that span reads LAEGGFSTV. The Proton acceptor role is filled by Asp177. Disordered stretches follow at residues 355 to 435, 638 to 831, and 906 to 1018; these read TDTI…RVLQ, NRLG…PADA, and PRSV…EFLT. A compositionally biased stretch (polar residues) spans 358–390; sequence IGPTETSIAPRQRPKANSTAATSSVLTIQSSAT. A compositionally biased stretch (low complexity) spans 417-435; that stretch reads VLMVQGPPQQPPQQHRVLQ. Ser676 carries the phosphoserine modification. Over residues 684–701 the composition is skewed to polar residues; that stretch reads HSPNQKSITANLTKNGGS. The segment covering 706 to 715 has biased composition (basic and acidic residues); it reads KDQRAGKKTS. 3 positions are modified to phosphoserine: Ser733, Ser806, and Ser807. Residues 787 to 813 are compositionally biased toward basic and acidic residues; sequence DKHSSDSECEQAKTKRGDTSSLRRDKP. The residue at position 819 (Thr819) is a Phosphothreonine. Ser908 is modified (phosphoserine). The span at 915-926 shows a compositional bias: polar residues; sequence TPFQPFSVSASK. A compositionally biased stretch (basic residues) spans 951–965; it reads VKQRSLQKLSSRQRR. Phosphoserine occurs at positions 1010, 1012, 1013, 1020, 1022, 1087, and 1091. The tract at residues 1117 to 1138 is disordered; sequence TPQQSQPVELDPFGAAPFPSKQ.

This sequence belongs to the protein kinase superfamily. Ser/Thr protein kinase family. Autophosphorylated. As to expression, expressed in osteocytes and osteoblasts.

It is found in the nucleus. It carries out the reaction L-seryl-[protein] + ATP = O-phospho-L-seryl-[protein] + ADP + H(+). The enzyme catalyses L-threonyl-[protein] + ATP = O-phospho-L-threonyl-[protein] + ADP + H(+). In terms of biological role, may be involved in osteoblast differentiation. The sequence is that of BMP-2-inducible protein kinase (Bmp2k) from Mus musculus (Mouse).